The chain runs to 298 residues: Ribosomal RNA small subunit methyltransferase H (298 aa).

S-adenosyl-L-methionine is bound by residues 35 to 37, Asp55, Phe82, Asp100, and Gln107; that span reads GGH.

This sequence belongs to the methyltransferase superfamily. RsmH family.

It localises to the cytoplasm. The enzyme catalyses cytidine(1402) in 16S rRNA + S-adenosyl-L-methionine = N(4)-methylcytidine(1402) in 16S rRNA + S-adenosyl-L-homocysteine + H(+). In terms of biological role, specifically methylates the N4 position of cytidine in position 1402 (C1402) of 16S rRNA. This is Ribosomal RNA small subunit methyltransferase H from Chlamydia abortus (strain DSM 27085 / S26/3) (Chlamydophila abortus).